The sequence spans 645 residues: Translation factor GUF1, mitochondrial (645 aa).

One can recognise a tr-type G domain in the interval 44–228 (ENYRNFSIVA…AIIDRIPPPT (185 aa)). GTP is bound by residues 53 to 60 (AHVDHGKS), 120 to 124 (DTPGH), and 174 to 177 (NKID).

This sequence belongs to the TRAFAC class translation factor GTPase superfamily. Classic translation factor GTPase family. LepA subfamily.

It is found in the mitochondrion inner membrane. It carries out the reaction GTP + H2O = GDP + phosphate + H(+). Its function is as follows. Promotes mitochondrial protein synthesis. May act as a fidelity factor of the translation reaction, by catalyzing a one-codon backward translocation of tRNAs on improperly translocated ribosomes. Binds to mitochondrial ribosomes in a GTP-dependent manner. This chain is Translation factor GUF1, mitochondrial, found in Saccharomyces cerevisiae (strain ATCC 204508 / S288c) (Baker's yeast).